The sequence spans 142 residues: Transcriptional regulator MraZ (142 aa).

SpoVT-AbrB domains lie at 5–47 (RFTH…PMDS) and 76–119 (ATVV…SPEN).

This sequence belongs to the MraZ family. In terms of assembly, forms oligomers.

The protein localises to the cytoplasm. Its subcellular location is the nucleoid. The chain is Transcriptional regulator MraZ from Thermomicrobium roseum (strain ATCC 27502 / DSM 5159 / P-2).